Consider the following 282-residue polypeptide: Malonyl-[acyl-carrier protein] O-methyltransferase 1 (282 aa).

It belongs to the methyltransferase superfamily.

It carries out the reaction malonyl-[ACP] + S-adenosyl-L-methionine = malonyl-[ACP] methyl ester + S-adenosyl-L-homocysteine. The protein operates within cofactor biosynthesis; biotin biosynthesis. Functionally, converts the free carboxyl group of a malonyl-thioester to its methyl ester by transfer of a methyl group from S-adenosyl-L-methionine (SAM). It allows to synthesize pimeloyl-ACP via the fatty acid synthetic pathway. In Coxiella burnetii (strain RSA 493 / Nine Mile phase I), this protein is Malonyl-[acyl-carrier protein] O-methyltransferase 1.